The chain runs to 484 residues: Glutamate--tRNA ligase (484 aa).

The 'HIGH' region motif lies at 11–21 (PSPTGYLHIGN). A 'KMSKS' region motif is present at residues 252 to 256 (KLSKR). Lys-255 serves as a coordination point for ATP.

The protein belongs to the class-I aminoacyl-tRNA synthetase family. Glutamate--tRNA ligase type 1 subfamily. Monomer.

The protein localises to the cytoplasm. The enzyme catalyses tRNA(Glu) + L-glutamate + ATP = L-glutamyl-tRNA(Glu) + AMP + diphosphate. In terms of biological role, catalyzes the attachment of glutamate to tRNA(Glu) in a two-step reaction: glutamate is first activated by ATP to form Glu-AMP and then transferred to the acceptor end of tRNA(Glu). The chain is Glutamate--tRNA ligase from Staphylococcus epidermidis (strain ATCC 35984 / DSM 28319 / BCRC 17069 / CCUG 31568 / BM 3577 / RP62A).